The sequence spans 1496 residues: Chromosome partition protein MukB (1496 aa).

63–70 (GGNGAGKS) lines the ATP pocket. 5 coiled-coil regions span residues 328–493 (KLEL…QRLS), 536–632 (KMQA…APAW), 808–832 (RAAR…HAER), 861–1171 (NPEE…SAEE), and 1235–1291 (IDAI…LQNI). The tract at residues 694 to 811 (PDGSDDVRLN…EVPLFGRAAR (118 aa)) is flexible hinge. Residues 1082 to 1091 (RARSRRDELQ) show a composition bias toward basic and acidic residues. The segment at 1082–1101 (RARSRRDELQQRLSQQRSRK) is disordered.

It belongs to the SMC family. MukB subfamily. Homodimerization via its hinge domain. Binds to DNA via its C-terminal region. Interacts, and probably forms a ternary complex, with MukE and MukF via its C-terminal region. The complex formation is stimulated by calcium or magnesium. Interacts with tubulin-related protein FtsZ.

The protein localises to the cytoplasm. It is found in the nucleoid. In terms of biological role, plays a central role in chromosome condensation, segregation and cell cycle progression. Functions as a homodimer, which is essential for chromosome partition. Involved in negative DNA supercoiling in vivo, and by this means organize and compact chromosomes. May achieve or facilitate chromosome segregation by condensation DNA from both sides of a centrally located replisome during cell division. This is Chromosome partition protein MukB from Actinobacillus pleuropneumoniae serotype 5b (strain L20).